The primary structure comprises 162 residues: Putative 4-hydroxy-4-methyl-2-oxoglutarate aldolase (162 aa).

Substrate-binding positions include 75-78 (GDML) and arginine 97. Aspartate 98 is an a divalent metal cation binding site.

This sequence belongs to the class II aldolase/RraA-like family. Homotrimer. A divalent metal cation is required as a cofactor.

It catalyses the reaction 4-hydroxy-4-methyl-2-oxoglutarate = 2 pyruvate. It carries out the reaction oxaloacetate + H(+) = pyruvate + CO2. Catalyzes the aldol cleavage of 4-hydroxy-4-methyl-2-oxoglutarate (HMG) into 2 molecules of pyruvate. Also contains a secondary oxaloacetate (OAA) decarboxylase activity due to the common pyruvate enolate transition state formed following C-C bond cleavage in the retro-aldol and decarboxylation reactions. This chain is Putative 4-hydroxy-4-methyl-2-oxoglutarate aldolase, found in Pseudomonas paraeruginosa (strain DSM 24068 / PA7) (Pseudomonas aeruginosa (strain PA7)).